Consider the following 805-residue polypeptide: Cation channel sperm-associated auxiliary subunit delta (805 aa).

The N-terminal stretch at 1–16 is a signal peptide; that stretch reads MLVLMLAAAVATMVRA. Residues 17–723 lie on the Extracellular side of the membrane; the sequence is HTLCRVHTVR…ALPVTKFQPL (707 aa). 7 disulfides stabilise this stretch: Cys20–Cys366, Cys56–Cys143, Cys142–Cys149, Cys384–Cys493, Cys507–Cys701, Cys522–Cys569, and Cys621–Cys651. 5 N-linked (GlcNAc...) asparagine glycosylation sites follow: Asn227, Asn419, Asn469, Asn535, and Asn627. Residues 724 to 745 traverse the membrane as a helical segment; it reads LTILLMVTTTLLTAWLAYAIPK. Residues 746 to 805 are Cytoplasmic-facing; sequence QLRSEKGQRLLGFCYQILQLCLGVCFCTWLRGKLRQWLRPRRVKDQNRGKVRVAQKHPET.

The protein belongs to the CATSPERD family. In terms of assembly, component of the CatSper complex or CatSpermasome composed of the core pore-forming members CATSPER1, CATSPER2, CATSPER3 and CATSPER4 as well as auxiliary members CATSPERB, CATSPERG2, CATSPERD, CATSPERE, CATSPERZ, C2CD6/CATSPERT, SLCO6C1, TMEM249, TMEM262 and EFCAB9. HSPA1 may be an additional auxiliary complex member. The core complex members CATSPER1, CATSPER2, CATSPER3 and CATSPER4 form a heterotetrameric channel. The auxiliary CATSPERB, CATSPERG2, CATSPERD and CATSPERE subunits form a pavilion-like structure over the pore which stabilizes the complex through interactions with CATSPER4, CATSPER3, CATSPER1 and CATSPER2 respectively. SLCO6C1 interacts with CATSPERE and TMEM262/CATSPERH interacts with CATSPERB, further stabilizing the complex. C2CD6/CATSPERT interacts at least with CATSPERD and is required for targeting the CatSper complex in the flagellar membrane. In terms of tissue distribution, testis-specific.

It localises to the cell projection. It is found in the cilium. Its subcellular location is the flagellum membrane. In terms of biological role, auxiliary component of the CatSper complex, a complex involved in sperm cell hyperactivation. Sperm cell hyperactivation is needed for sperm motility which is essential late in the preparation of sperm for fertilization. Required for CATSPER1 stability before intraflagellar transport and/or incorporation of the CatSper complex channel into the flagellar membrane. The protein is Cation channel sperm-associated auxiliary subunit delta of Mus musculus (Mouse).